Consider the following 58-residue polypeptide: UPF0391 membrane protein Sbal_1421 (58 aa).

Transmembrane regions (helical) follow at residues 6–26 (LVFLVVAVIAGLLGFTGIAGA) and 28–48 (AGIAKIIFLIFIVLLVISLLV).

This sequence belongs to the UPF0391 family.

It localises to the cell membrane. In Shewanella baltica (strain OS155 / ATCC BAA-1091), this protein is UPF0391 membrane protein Sbal_1421.